Here is a 400-residue protein sequence, read N- to C-terminus: Lysophospholipid transporter LplT (400 aa).

Transmembrane regions (helical) follow at residues 19–39 (VIVA…ATLA), 53–73 (VLQM…GQIA), 91–111 (AGAA…LVGI), 139–159 (LMEA…GVLA), 164–184 (IAAL…NLFI), 195–213 (SWRL…VVLW), 227–247 (LFWG…PVAL), 257–277 (YLNA…AKLV), 281–301 (TVSR…IFSL), 304–324 (ALLP…FFVV), 352–372 (NSAM…GVPA), and 373–393 (VAIG…LWIW).

Belongs to the major facilitator superfamily. LplT (TC 2.A.1.42) family.

It localises to the cell inner membrane. Catalyzes the facilitated diffusion of 2-acyl-glycero-3-phosphoethanolamine (2-acyl-GPE) into the cell. The polypeptide is Lysophospholipid transporter LplT (Salmonella schwarzengrund (strain CVM19633)).